The sequence spans 157 residues: Ribosome-binding factor A (157 aa).

The disordered stretch occupies residues Ser-124–Glu-157. A compositionally biased stretch (basic and acidic residues) spans Thr-147–Glu-157.

It belongs to the RbfA family. In terms of assembly, monomer. Binds 30S ribosomal subunits, but not 50S ribosomal subunits or 70S ribosomes.

It localises to the cytoplasm. One of several proteins that assist in the late maturation steps of the functional core of the 30S ribosomal subunit. Associates with free 30S ribosomal subunits (but not with 30S subunits that are part of 70S ribosomes or polysomes). Required for efficient processing of 16S rRNA. May interact with the 5'-terminal helix region of 16S rRNA. This Streptomyces avermitilis (strain ATCC 31267 / DSM 46492 / JCM 5070 / NBRC 14893 / NCIMB 12804 / NRRL 8165 / MA-4680) protein is Ribosome-binding factor A.